Reading from the N-terminus, the 327-residue chain is Aspartate--ammonia ligase (327 aa).

Belongs to the class-II aminoacyl-tRNA synthetase family. AsnA subfamily.

The protein resides in the cytoplasm. It carries out the reaction L-aspartate + NH4(+) + ATP = L-asparagine + AMP + diphosphate + H(+). The protein operates within amino-acid biosynthesis; L-asparagine biosynthesis; L-asparagine from L-aspartate (ammonia route): step 1/1. The protein is Aspartate--ammonia ligase of Bacillus cereus (strain G9842).